A 428-amino-acid chain; its full sequence is MTIVEDAKKGIITEEMKIVAKDEGLDPEFIRRGIAAGRIVIPTSPYRQVKICGLGEGLRTKVNASIGVSSDIVDVNMEVQKAIAAEKAGADTLMELGTGGDFLGIRKKVIDSISLSVGSVPLYQAFIEAARKYGSIVHMTEDELFNATEAQAKLGTNFMAIHTGINNITLDRLKAHGRYGGLCSRGGAFMSSWMLHNEKENPLYANFDYLVEILKEHEVVLSTGNGMRAGAVHDATDRAQIQELIINSEVAEKAHQQGLQVIVEGPGHVPLDQIATNVKLMKEMSGHKPFYMLGPLVTDIAPGYDHIVTAIGASVSASYGCDFLCYVTPAEHLALPNLEDVITGVKTSRIAAHVGDMIKYPERARQWDLDMGRARRELDWEKMYSLAIDPEHARAVRNSRAPEDTDACTMCGNFCALKIVNQNYNLAK.

Residues methionine 94, tyrosine 123, histidine 162, 184–186, 225–228, and glutamate 264 contribute to the substrate site; these read SRG and NGMR. Residue histidine 268 participates in Zn(2+) binding. Residue tyrosine 291 coordinates substrate. Histidine 332 lines the Zn(2+) pocket. [4Fe-4S] cluster-binding residues include cysteine 408, cysteine 411, and cysteine 415.

It belongs to the ThiC family. It depends on [4Fe-4S] cluster as a cofactor.

It carries out the reaction 5-amino-1-(5-phospho-beta-D-ribosyl)imidazole + S-adenosyl-L-methionine = 4-amino-2-methyl-5-(phosphooxymethyl)pyrimidine + CO + 5'-deoxyadenosine + formate + L-methionine + 3 H(+). Its pathway is cofactor biosynthesis; thiamine diphosphate biosynthesis. Its function is as follows. Catalyzes the synthesis of the hydroxymethylpyrimidine phosphate (HMP-P) moiety of thiamine from aminoimidazole ribotide (AIR) in a radical S-adenosyl-L-methionine (SAM)-dependent reaction. This chain is Phosphomethylpyrimidine synthase 2, found in Methanosarcina acetivorans (strain ATCC 35395 / DSM 2834 / JCM 12185 / C2A).